Here is a 782-residue protein sequence, read N- to C-terminus: Potassium transporter 6 (782 aa).

Residues 1–18 are Cytoplasmic-facing; the sequence is MEIESGSYQNAKKESWRT. The chain crosses the membrane as a helical span at residues 19-39; sequence VLTLAYQSLGVVYGDLSISPL. Over 40 to 61 the chain is Extracellular; that stretch reads YVYKSTFAEDIHHSESNEEIFG. The chain crosses the membrane as a helical span at residues 62 to 82; sequence VLSFIFWTITLVPLLKYVFIV. The Cytoplasmic portion of the chain corresponds to 83–153; it reads LRADDNGEGG…TLEKHGVLQK (71 aa). A helical transmembrane segment spans residues 154-174; it reads ILLVLALIGTCMVIGDGVLTP. Topologically, residues 175 to 195 are extracellular; that stretch reads AISVFSAVSGVELSMSKEHHK. A helical membrane pass occupies residues 196–216; that stretch reads YIELPAACVILIGLFALQHYG. At 217–219 the chain is on the cytoplasmic side; sequence THR. Residues 220–240 form a helical membrane-spanning segment; sequence VGFLFAPVILLWLMCISAIGV. Topologically, residues 241–270 are extracellular; sequence YNIFHWNPHVYQALSPYYMYKFLKKTQSRG. A helical transmembrane segment spans residues 271–291; it reads WMSLGGILLCITGSEAMFADL. Residues 292–296 are Cytoplasmic-facing; that stretch reads GHFSQ. The chain crosses the membrane as a helical span at residues 297–317; sequence LSIKIAFTSLVYPSLILAYMG. Topologically, residues 318–347 are extracellular; it reads QAAYLSQHHIIESEYNIGFYVSVPERLRWP. Residues 348-368 traverse the membrane as a helical segment; sequence VLVIAILAAVVGSQAIITGTF. The Cytoplasmic segment spans residues 369 to 395; the sequence is SIIKQCSALGCFPKVKIVHTSSKIHGQ. Residues 396 to 416 traverse the membrane as a helical segment; that stretch reads IYIPEINWILMVLCLAVTIGF. The Extracellular portion of the chain corresponds to 417 to 421; that stretch reads RDTKR. 2 consecutive transmembrane segments (helical) span residues 422–442 and 443–463; these read LGNA…CLMS and LVIV…VVFF. At 464–474 the chain is on the extracellular side; sequence GTIESLYFSAS. A helical membrane pass occupies residues 475–495; that stretch reads LIKFLEGAWVPIALAFCFLLA. The Cytoplasmic segment spans residues 496-782; sequence MCTWHYGTLK…TLEVGMIYNV (287 aa). Residues 664-675 are compositionally biased toward basic and acidic residues; the sequence is YESDIDDPDKPG. The segment at 664–693 is disordered; it reads YESDIDDPDKPGTSEIRSPKPKKKSKSKVK. Positions 682–693 are enriched in basic residues; the sequence is PKPKKKSKSKVK.

It belongs to the HAK/KUP transporter (TC 2.A.72.3) family.

The protein localises to the cell membrane. In terms of biological role, probable potassium transporter. In Arabidopsis thaliana (Mouse-ear cress), this protein is Potassium transporter 6 (POT6).